Here is a 477-residue protein sequence, read N- to C-terminus: Glutamyl-tRNA(Gln) amidotransferase subunit A (477 aa).

Catalysis depends on charge relay system residues K76 and S151. The active-site Acyl-ester intermediate is S175.

This sequence belongs to the amidase family. GatA subfamily. In terms of assembly, heterotrimer of A, B and C subunits.

The enzyme catalyses L-glutamyl-tRNA(Gln) + L-glutamine + ATP + H2O = L-glutaminyl-tRNA(Gln) + L-glutamate + ADP + phosphate + H(+). Its function is as follows. Allows the formation of correctly charged Gln-tRNA(Gln) through the transamidation of misacylated Glu-tRNA(Gln) in organisms which lack glutaminyl-tRNA synthetase. The reaction takes place in the presence of glutamine and ATP through an activated gamma-phospho-Glu-tRNA(Gln). The protein is Glutamyl-tRNA(Gln) amidotransferase subunit A of Chlorobium phaeobacteroides (strain BS1).